An 838-amino-acid chain; its full sequence is Protein P (838 aa).

A terminal protein domain (TP) region spans residues 1–179 (MPLSYQHFRK…FCGSPYSWEQ (179 aa)). The interval 180–341 (ELQHSQRHGD…YCLSHLVNLR (162 aa)) is spacer. Positions 219 to 245 (GLQPHQGPLASSQPGRSGSIRARAHPS) are disordered. A polymerase/reverse transcriptase domain (RT) region spans residues 342-685 (EDWGPCDDHG…YMNLYPVARQ (344 aa)). Residues 352–595 (EHHIRIPRTP…YSLNFMGYII (244 aa)) enclose the Reverse transcriptase domain. Mg(2+)-binding residues include Asp424, Asp546, and Asp547.

It belongs to the hepadnaviridae P protein family.

The catalysed reaction is DNA(n) + a 2'-deoxyribonucleoside 5'-triphosphate = DNA(n+1) + diphosphate. It carries out the reaction Endonucleolytic cleavage to 5'-phosphomonoester.. Activated by host HSP70 and HSP40 in vitro to be able to bind the epsilon loop of the pgRNA. Because deletion of the RNase H region renders the protein partly chaperone-independent, the chaperones may be needed indirectly to relieve occlusion of the RNA-binding site by this domain. Inhibited by several reverse-transcriptase inhibitors: Lamivudine, Adefovir and Entecavir. Functionally, multifunctional enzyme that converts the viral RNA genome into dsDNA in viral cytoplasmic capsids. This enzyme displays a DNA polymerase activity that can copy either DNA or RNA templates, and a ribonuclease H (RNase H) activity that cleaves the RNA strand of RNA-DNA heteroduplexes in a partially processive 3'- to 5'-endonucleasic mode. Neo-synthesized pregenomic RNA (pgRNA) are encapsidated together with the P protein, and reverse-transcribed inside the nucleocapsid. Initiation of reverse-transcription occurs first by binding the epsilon loop on the pgRNA genome, and is initiated by protein priming, thereby the 5'-end of (-)DNA is covalently linked to P protein. Partial (+)DNA is synthesized from the (-)DNA template and generates the relaxed circular DNA (RC-DNA) genome. After budding and infection, the RC-DNA migrates in the nucleus, and is converted into a plasmid-like covalently closed circular DNA (cccDNA). The activity of P protein does not seem to be necessary for cccDNA generation, and is presumably released from (+)DNA by host nuclear DNA repair machinery. The polypeptide is Protein P (Hepatitis B virus genotype A2 subtype adw (isolate Japan/Nishioka/1983) (HBV-A)).